The sequence spans 338 residues: Probable replication factor C subunit 2 (338 aa).

60–67 (GPPGTGKT) is an ATP binding site.

This sequence belongs to the activator 1 small subunits family. In terms of assembly, heteropentamer of various rfc subunits that forms a complex (RFC) with PCNA in the presence of ATP.

Its subcellular location is the nucleus. Functionally, the elongation of primed DNA templates by DNA polymerase delta and epsilon requires the action of the accessory proteins PCNA and activator 1. In Dictyostelium discoideum (Social amoeba), this protein is Probable replication factor C subunit 2 (rfc2).